A 221-amino-acid chain; its full sequence is ATP phosphoribosyltransferase (221 aa).

This sequence belongs to the ATP phosphoribosyltransferase family. Short subfamily. In terms of assembly, heteromultimer composed of HisG and HisZ subunits.

The protein localises to the cytoplasm. The enzyme catalyses 1-(5-phospho-beta-D-ribosyl)-ATP + diphosphate = 5-phospho-alpha-D-ribose 1-diphosphate + ATP. The protein operates within amino-acid biosynthesis; L-histidine biosynthesis; L-histidine from 5-phospho-alpha-D-ribose 1-diphosphate: step 1/9. Functionally, catalyzes the condensation of ATP and 5-phosphoribose 1-diphosphate to form N'-(5'-phosphoribosyl)-ATP (PR-ATP). Has a crucial role in the pathway because the rate of histidine biosynthesis seems to be controlled primarily by regulation of HisG enzymatic activity. The polypeptide is ATP phosphoribosyltransferase (Neisseria gonorrhoeae (strain ATCC 700825 / FA 1090)).